Consider the following 78-residue polypeptide: Small outer capsid protein (78 aa).

This sequence belongs to the Tevenvirinae Soc family. As to quaternary structure, homotrimer. Interacts with the major capsid protein; three soc molecules associate with each interface between the major capsid protein facets.

Its subcellular location is the virion. In terms of biological role, capsid decoration protein which helps to stabilize the capsid against extremes of pH and temperature. Once maturation and expansion of the capsid has occured, trimers of soc attach the interfaces between the hexamer of the major capsid protein. Acts as a 'glue' between neighboring hexameric capsomers. Dispensable for the head morphogenesis and phage infection. This Escherichia phage RB69 (Bacteriophage RB69) protein is Small outer capsid protein.